The primary structure comprises 102 residues: Large ribosomal subunit protein uL24 (102 aa).

This sequence belongs to the universal ribosomal protein uL24 family. As to quaternary structure, part of the 50S ribosomal subunit.

Functionally, one of two assembly initiator proteins, it binds directly to the 5'-end of the 23S rRNA, where it nucleates assembly of the 50S subunit. In terms of biological role, one of the proteins that surrounds the polypeptide exit tunnel on the outside of the subunit. In Limosilactobacillus fermentum (strain NBRC 3956 / LMG 18251) (Lactobacillus fermentum), this protein is Large ribosomal subunit protein uL24.